Consider the following 467-residue polypeptide: GTPase Der (467 aa).

EngA-type G domains are found at residues 25-188 and 199-372; these read PVVA…PEAP and RRVA…ASWE. Residues 31–38, 78–82, 140–143, 205–212, 252–256, and 317–320 each bind GTP; these read GRPNVGKS, DTGGW, NKAD, DTAGL, and NKWD. One can recognise a KH-like domain in the interval 373-455; sequence TRVPTAQLNA…PIEISVRARK (83 aa).

It belongs to the TRAFAC class TrmE-Era-EngA-EngB-Septin-like GTPase superfamily. EngA (Der) GTPase family. Associates with the 50S ribosomal subunit.

Its function is as follows. GTPase that plays an essential role in the late steps of ribosome biogenesis. This is GTPase Der from Salinispora tropica (strain ATCC BAA-916 / DSM 44818 / JCM 13857 / NBRC 105044 / CNB-440).